The sequence spans 341 residues: Ribosomal RNA small subunit methyltransferase H (341 aa).

S-adenosyl-L-methionine is bound by residues 47–49, Asp64, Phe91, Asp109, and Gln116; that span reads GGY.

The protein belongs to the methyltransferase superfamily. RsmH family.

The protein resides in the cytoplasm. The catalysed reaction is cytidine(1402) in 16S rRNA + S-adenosyl-L-methionine = N(4)-methylcytidine(1402) in 16S rRNA + S-adenosyl-L-homocysteine + H(+). Its function is as follows. Specifically methylates the N4 position of cytidine in position 1402 (C1402) of 16S rRNA. This is Ribosomal RNA small subunit methyltransferase H from Rhizobium rhizogenes (strain K84 / ATCC BAA-868) (Agrobacterium radiobacter).